We begin with the raw amino-acid sequence, 146 residues long: Protein new-glue 3 (146 aa).

The signal sequence occupies residues 1-23 (MRYSCVLLLLATVACLLIPQTGG). The disordered stretch occupies residues 23–146 (GSTATTTSTS…RRARSARRLS (124 aa)). A compositionally biased stretch (low complexity) spans 24 to 66 (STATTTSTSASATTTTSASATTTTASDTTTTTAATTTTSSSSS). Tandem repeats lie at residues 31–38 (TSASATTT), 39–46 (TSASATTT), 47–53 (TASDTTT), and 54–61 (TTAATTTT). Positions 31 to 61 (TSASATTTTSASATTTTASDTTTTTAATTTT) are 4 X 8 AA approximate tandem repeats of T-S-A-S-A-T-T-T. The segment covering 67-92 (KSKKKKRTYHYTRHVYRPKRIRHIYR) has biased composition (basic residues). Residues 93–106 (HKADDDESSTDRTS) are compositionally biased toward basic and acidic residues. The span at 116 to 132 (SSSSSSSGSTSSRSGNS) shows a compositional bias: low complexity. The span at 133–146 (RIRRRRARSARRLS) shows a compositional bias: basic residues.

In terms of tissue distribution, salivary gland specific.

The protein resides in the secreted. This is Protein new-glue 3 (ng3) from Drosophila melanogaster (Fruit fly).